A 346-amino-acid chain; its full sequence is MPTNFAAIVPGKNQSLVVQEAPYPTAGENRIVVRVHALAVNAVDYATQMMGETLFPWVTYPLVLGEDIAGEVVAIGPGVTRFKPGDRVVGHAVGTNSNNSAEGAFQQYVVLLENMASPLPHALEYQQAAVVPLAFSTAIVGLFQKDYLGLQIPSLTPTRTGKTLLIWGGATSVGCNAIQLAVAAGYEVITTCSPHNFDLVKSLGATAVFDYKKPSIRDDLREAFRGKTCAGALAIAGVVPQTRNEAAEACLNLVAESEGDKFVALSMPAPPNVPDGVSCKFIFASTVKDNEVSHQLYGYLGEALAHGSFIAAPEAEVVGTGLEAVQGALNALKQGVSAKKLVVTLP.

43 to 48 is a binding site for NADP(+); sequence VDYATQ. Residue 133 to 140 participates in substrate binding; the sequence is LAFSTAIV. Residues 170–173, 193–196, tyrosine 211, and 251–252 contribute to the NADP(+) site; these read ATSV, SPHN, and LN. 269 to 273 lines the substrate pocket; that stretch reads APPNV. 336-337 serves as a coordination point for NADP(+); the sequence is VS.

Belongs to the zinc-containing alcohol dehydrogenase family.

It functions in the pathway secondary metabolite biosynthesis. In terms of biological role, dehydrogenase; part of the gene cluster that mediates the biosynthesis of azaphilones, a class of fungal metabolites characterized by a highly oxygenated pyrano-quinone bicyclic core and exhibiting a broad range of bioactivities. In the first step, the non-reducing polyketide synthase azaA forms the hexaketide precursor from successive condensations of five malonyl-CoA units, presumably with a simple acetyl-CoA starter unit. The reactive polyketide chain then undergoes a PT-mediated C2-C7 cyclization to afford the aromatic ring and is eventually released as an aldehyde through the R-domain. The putative ketoreductase azaE is proposed to catalyze the reduction of the terminal ketone resulting in the early culture product FK17-P2a. The monooxygenase azaH was demonstrated to be the only enzyme required to convert FK17-P2a to azanigerone E. AzaH first hydroxylates the benzaldehyde intermediate FK17-P2a at C4, which triggers the formation of the pyran-ring to afford azanigerone E. In parallel, the 2,4-dimethylhexanoyl chain is synthesized by the HR-PKS azaB and is proposed to be transferred to the C4-hydroxyl of azanigerone E by the acyltransferase azaD directly from the ACP domain of azaB. Alternatively, the 2,4-dimethyl-hexanoyl chain may be offloaded from the HR-PKS as a carboxylic acid and converted to an acyl-CoA by azaF. The resulting acyl-CoA molecule could then be taken up as a substrate by AzaD to form azanigerone B. To yield the carboxylic acid substituent in azanigerone A, the hydroxypropyl side chain of azanigerone B would need to undergo a C-C oxidative cleavage catalyzed by cytochrome P450 AzaI. AzaI is proposed to act on a vicinal diol that leads to a C-C bond scission either through an alkoxyradical intermediate or a peroxy complex. In the biosynthesis of azanigerone A, azanigerone B first undergoes hydroxylation at C10, possibly catalyzed by one of the two FAD-dependent monooxygenases encoded in the cluster, azaG or azaL, resulting in the vicinal diol azanigerone C. Oxidative cleavage of azanigerone C by azaI would yield the corresponding aldehyde derivative of azanigerone A. Finally, the dehydrogenase azaJ is proposed to convert the aldehyde functional group into the carboxylic acid, completing the conversion from azanigerone B to azanigerone A. Alternatively, the oxidation of aldehyde to carboxylic acid may be catalyzed by the same P450 enzyme azaI via consecutive oxidation or by endogenous alcohol dehydrogenase. This is Dehydrogenase azaJ from Aspergillus niger (strain ATCC 1015 / CBS 113.46 / FGSC A1144 / LSHB Ac4 / NCTC 3858a / NRRL 328 / USDA 3528.7).